A 545-amino-acid chain; its full sequence is MLPINNNFSLPQNSFYNTISGTYADYFSAWDKWEKQALPGEERDEAVSRLKECLINNSDELRLDRLNLSSLPDNLPAQITLLNVSYNQLTNLPELPVTLKKLYSASNKLSELPVLPPALESLQVQHNELENLPALPDSLLTMNISYNEIVSLPSLPQALKNLRATRNFLTELPAFSEGNNPVVREYFFDRNQISHIPESILNLRNECSIHISDNPLSSHALQALQRLTSSPDYHGPRIYFSMSDGQQNTLHRPLADAVTAWFPENKQSDVSQTWHAFEHEEHANTFSAFLDRLSDTVSARNTSGFREQVAAWLEKLSASAELRQQSFAVAADATESCEDRVALTWNNLRKTLLVHQASEGLFDNDTGALLSLGREMFRLEILEDIARDKVRTLHFVDEIEVYLAFQTMLAEKLQLSTAVKEMRFYGVSGVTANDLRTAEAMVRSREENEFTDWFSLWGPWHAVLKRTEADRWALAEEQKYEMLENEYPQRVADRLKASGLSGDADAEREAGAQVMRETEQQIYRQLTDEVLALRLSENGSQLHHS.

The interval 1–242 (MLPINNNFSL…YHGPRIYFSM (242 aa)) is interaction with target proteins. LRR repeat units lie at residues 57–77 (NSDE…NLPA), 78–99 (QITL…PVTL), 100–117 (KKLY…VLPP), 118–139 (ALES…PDSL), 140–157 (LTMN…SLPQ), 158–179 (ALKN…SEGN), 182–203 (VVRE…ILNL), and 205–228 (NECS…QRLT). A linker region spans residues 243 to 250 (SDGQQNTL). An E3 ubiquitin-protein ligase catalytic domain region spans residues 251-545 (HRPLADAVTA…SENGSQLHHS (295 aa)). The 293-residue stretch at 253–545 (PLADAVTAWF…SENGSQLHHS (293 aa)) folds into the NEL domain. The active-site Glycyl thioester intermediate is the Cys-337.

The protein belongs to the LRR-containing bacterial E3 ligase family. Also interacts with human and mouse U2AF1 (U2AF35). Post-translationally, ubiquitinated in the presence of host E1 ubiquitin-activating enzyme, E2 ubiquitin-conjugating enzyme and ubiquitin.

It localises to the secreted. It is found in the host cytoplasm. The protein localises to the host nucleus. It catalyses the reaction S-ubiquitinyl-[E2 ubiquitin-conjugating enzyme]-L-cysteine + [acceptor protein]-L-lysine = [E2 ubiquitin-conjugating enzyme]-L-cysteine + N(6)-ubiquitinyl-[acceptor protein]-L-lysine.. With respect to regulation, exists in an autoinhibited state in the absence of substrate protein, due to interactions of the leucine-rich repeats with NEL domain. Is activated upon binding to a substrate protein. Its function is as follows. Effector E3 ubiquitin ligase that interferes with host's ubiquitination pathway and modulates the acute inflammatory responses, thus facilitating bacterial colonization within the host cell. Interacts with IKBKG (NEMO) and TNIP1 (ABIN-1), a ubiquitin-binding adapter protein, which results in TNIP1-dependent 'Lys-27'-linked polyubiquitination of IKBKG. Consequently, polyubiquitinated IKBKG undergoes proteasome-dependent degradation, which perturbs NF-kappa-B activation during bacterial infection. Mediates polyubiquitination of host U2AF1, leading to its proteasomal degradation. Catalyzes 'Lys-48'-linked polyubiquitination and subsequent degradation of a subset of host guanylate-binding proteins (GBP1, GBP2, GBP4 and GBP6), thereby suppressing host cell defense. In contrast, host GBP3 and GBP7 are not ubiquitinated by IpaH9.8. Uses UBE2D2 (UBCH5B) as an E2 ubiquitin-conjugating enzyme. The polypeptide is E3 ubiquitin-protein ligase ipaH9.8 (ipaH9.8) (Shigella dysenteriae serotype 1 (strain Sd197)).